Consider the following 388-residue polypeptide: MSKRDYYEVLGVARTAGEGELKSAFRKLAMAYHPDRNPGDKEAEIKFKEVNEAYQTLSDGQKRAAYDRFGHAAFSQGAGGPGGPGFGADFGDFMSDIFDTFFGDARAGGAAGARGGRAGGRERGADLRYNLEITLEEAFTGKTETIRLPTSVTCEVCAGSGAKAGSKPRTCPTCGGYGRVRAAQGFFAIERTCPNCHGRGEIIDDPCTACGGAGRVTRERTLSVNVPAGVDDGLRIRLAGEGESGLRGGPAGDLYIFLSIKPHPFFQRDGADLFCRVPISMVTAALSGEITVPVIDGSHTTVRIPAGTQTNKQFRLKGKGMPVLRSRDVGDLYIQVFVETPQNLTKRQRELLQEFDQHGSQADNHPESAGFFSRVKEFFDGLSGSGRA.

In terms of domain architecture, J spans 5–70 (DYYEVLGVAR…QKRAAYDRFG (66 aa)). The CR-type zinc finger occupies 141–219 (GKTETIRLPT…CGGAGRVTRE (79 aa)). Zn(2+) is bound by residues cysteine 154, cysteine 157, cysteine 171, cysteine 174, cysteine 193, cysteine 196, cysteine 207, and cysteine 210. CXXCXGXG motif repeat units lie at residues 154–161 (CEVCAGSG), 171–178 (CPTCGGYG), 193–200 (CPNCHGRG), and 207–214 (CTACGGAG).

Belongs to the DnaJ family. Homodimer. It depends on Zn(2+) as a cofactor.

Its subcellular location is the cytoplasm. Participates actively in the response to hyperosmotic and heat shock by preventing the aggregation of stress-denatured proteins and by disaggregating proteins, also in an autonomous, DnaK-independent fashion. Unfolded proteins bind initially to DnaJ; upon interaction with the DnaJ-bound protein, DnaK hydrolyzes its bound ATP, resulting in the formation of a stable complex. GrpE releases ADP from DnaK; ATP binding to DnaK triggers the release of the substrate protein, thus completing the reaction cycle. Several rounds of ATP-dependent interactions between DnaJ, DnaK and GrpE are required for fully efficient folding. Also involved, together with DnaK and GrpE, in the DNA replication of plasmids through activation of initiation proteins. The protein is Chaperone protein DnaJ of Methylobacterium nodulans (strain LMG 21967 / CNCM I-2342 / ORS 2060).